A 557-amino-acid polypeptide reads, in one-letter code: Dihydroxy-acid dehydratase (557 aa).

A Mg(2+)-binding site is contributed by D78. Residue C119 coordinates [2Fe-2S] cluster. Residues D120 and K121 each contribute to the Mg(2+) site. K121 is modified (N6-carboxylysine). C192 provides a ligand contact to [2Fe-2S] cluster. Mg(2+) is bound at residue E443. S469 acts as the Proton acceptor in catalysis.

This sequence belongs to the IlvD/Edd family. Homodimer. Requires [2Fe-2S] cluster as cofactor. Mg(2+) serves as cofactor.

The catalysed reaction is (2R)-2,3-dihydroxy-3-methylbutanoate = 3-methyl-2-oxobutanoate + H2O. It carries out the reaction (2R,3R)-2,3-dihydroxy-3-methylpentanoate = (S)-3-methyl-2-oxopentanoate + H2O. It functions in the pathway amino-acid biosynthesis; L-isoleucine biosynthesis; L-isoleucine from 2-oxobutanoate: step 3/4. It participates in amino-acid biosynthesis; L-valine biosynthesis; L-valine from pyruvate: step 3/4. Functions in the biosynthesis of branched-chain amino acids. Catalyzes the dehydration of (2R,3R)-2,3-dihydroxy-3-methylpentanoate (2,3-dihydroxy-3-methylvalerate) into 2-oxo-3-methylpentanoate (2-oxo-3-methylvalerate) and of (2R)-2,3-dihydroxy-3-methylbutanoate (2,3-dihydroxyisovalerate) into 2-oxo-3-methylbutanoate (2-oxoisovalerate), the penultimate precursor to L-isoleucine and L-valine, respectively. This is Dihydroxy-acid dehydratase from Persephonella marina (strain DSM 14350 / EX-H1).